We begin with the raw amino-acid sequence, 25 residues long: Tubulin alpha chain (25 aa).

Gln11 provides a ligand contact to GTP.

Belongs to the tubulin family. Dimer of alpha and beta chains. A typical microtubule is a hollow water-filled tube with an outer diameter of 25 nm and an inner diameter of 15 nM. Alpha-beta heterodimers associate head-to-tail to form protofilaments running lengthwise along the microtubule wall with the beta-tubulin subunit facing the microtubule plus end conferring a structural polarity. Microtubules usually have 13 protofilaments but different protofilament numbers can be found in some organisms and specialized cells. Requires Mg(2+) as cofactor.

Its subcellular location is the cytoplasm. It localises to the cytoskeleton. The catalysed reaction is GTP + H2O = GDP + phosphate + H(+). Functionally, tubulin is the major constituent of microtubules, a cylinder consisting of laterally associated linear protofilaments composed of alpha- and beta-tubulin heterodimers. Microtubules grow by the addition of GTP-tubulin dimers to the microtubule end, where a stabilizing cap forms. Below the cap, tubulin dimers are in GDP-bound state, owing to GTPase activity of alpha-tubulin. The chain is Tubulin alpha chain from Leptomonas seymouri.